Consider the following 336-residue polypeptide: GTPase Obg (336 aa).

The region spanning 1-159 (MKFVDEATLI…KTLKLELKLL (159 aa)) is the Obg domain. The OBG-type G domain occupies 160–329 (ADVGLVGLPN…LIEAIFAQLR (170 aa)). GTP is bound by residues 166–173 (GLPNAGKS), 191–195 (FTTLA), 213–216 (DIPG), 283–286 (NKMD), and 310–312 (SAI). Mg(2+)-binding residues include Ser173 and Thr193.

Belongs to the TRAFAC class OBG-HflX-like GTPase superfamily. OBG GTPase family. As to quaternary structure, monomer. Mg(2+) serves as cofactor.

The protein localises to the cytoplasm. Functionally, an essential GTPase which binds GTP, GDP and possibly (p)ppGpp with moderate affinity, with high nucleotide exchange rates and a fairly low GTP hydrolysis rate. Plays a role in control of the cell cycle, stress response, ribosome biogenesis and in those bacteria that undergo differentiation, in morphogenesis control. The polypeptide is GTPase Obg (Desulfatibacillum aliphaticivorans).